The primary structure comprises 330 residues: D-lactate dehydrogenase (330 aa).

Residues 156 to 157 (RI), Asp-176, 206 to 207 (VP), 233 to 235 (AAR), and Asp-259 each bind NAD(+). Arg-235 is a catalytic residue. The active site involves Glu-264. His-296 functions as the Proton donor in the catalytic mechanism.

Belongs to the D-isomer specific 2-hydroxyacid dehydrogenase family.

The enzyme catalyses (R)-lactate + NAD(+) = pyruvate + NADH + H(+). The protein is D-lactate dehydrogenase (ldhD) of Staphylococcus aureus (strain MRSA252).